Here is a 421-residue protein sequence, read N- to C-terminus: Acetate kinase (421 aa).

Position 7 (asparagine 7) interacts with Mg(2+). ATP is bound at residue lysine 14. Residue arginine 91 participates in substrate binding. The active-site Proton donor/acceptor is aspartate 148. ATP contacts are provided by residues 208–212 (HIGNG) and 283–285 (DRR). Glutamate 387 lines the Mg(2+) pocket.

It belongs to the acetokinase family. In terms of assembly, homodimer. The cofactor is Mg(2+). Requires Mn(2+) as cofactor.

The protein localises to the cytoplasm. The enzyme catalyses acetate + ATP = acetyl phosphate + ADP. The protein operates within metabolic intermediate biosynthesis; acetyl-CoA biosynthesis; acetyl-CoA from acetate: step 1/2. Functionally, catalyzes the formation of acetyl phosphate from acetate and ATP. Can also catalyze the reverse reaction. This chain is Acetate kinase, found in Geobacter metallireducens (strain ATCC 53774 / DSM 7210 / GS-15).